A 687-amino-acid polypeptide reads, in one-letter code: Protein white (687 aa).

The interval 1 to 30 is disordered; it reads MGQEDQELLIRGGSKHPSAEHLNNGDSGAA. Residues 1–419 lie on the Cytoplasmic side of the membrane; sequence MGQEDQELLI…FMQFRAVLWR (419 aa). The ABC transporter domain maps to 93-341; it reads NRTRGLFCNE…FSYVGAQCPT (249 aa). 130–137 lines the ATP pocket; sequence GSSGAGKT. The helical transmembrane segment at 420–440 threads the bilayer; sequence SWLSVLKEPLLVKVRLIQTTM. The Extracellular portion of the chain corresponds to 441-460; sequence VAILIGLIFLGQQLTQVGVM. A helical membrane pass occupies residues 461–481; that stretch reads NINGAIFLFLTNMTFQNVFAT. Over 482 to 497 the chain is Cytoplasmic; it reads INVFTSELPVFMREAR. A helical membrane pass occupies residues 498-518; sequence SRLYRCDTYFLGKTIAELPLF. The Extracellular segment spans residues 519-531; sequence LTVPLVFTAIAYP. The chain crosses the membrane as a helical span at residues 532-552; it reads MIGLRAGVLHFFNCLALVTLV. Residues 553–568 are Cytoplasmic-facing; that stretch reads ANVSTSFGYLISCASS. A helical membrane pass occupies residues 569 to 589; sequence STSMALSVGPPVIIPFLLFGG. Residues 590–644 lie on the Extracellular side of the membrane; it reads FFLNSGSVPVYLKWLSYLSWFRYANEGLLINQWADVEPGEISCTSSNTTCPSSGK. Asn636 is a glycosylation site (N-linked (GlcNAc...) asparagine). A helical membrane pass occupies residues 645–665; it reads VILETLNFSAADLPLDYVGLA. Over 666–675 the chain is Cytoplasmic; the sequence is ILIVSFRVLA.

It belongs to the ABC transporter superfamily. ABCG family. Eye pigment precursor importer (TC 3.A.1.204) subfamily. May form a heterodimer with bw/brown. May form a heterodimer with st/scarlet. In terms of tissue distribution, expressed in the head (at protein level). Expressed in the eye, specifically in retina primary pigment cells, in the basement membrane of the base of secondary and tertiary pigment cells, and in retinula cells (at protein level). Expressed in the retina underlying lamina in the epithelial glia that surrounds the array of lamina cartridges (at protein level). Weakly expressed in photoreceptors, specifically in terminals of R1-R6, R7 and R8 (at protein level). Expressed at very low levels in medulla and central brain (at protein level). Expressed in principal cells of the Malpighian tubules.

The protein resides in the cytoplasmic vesicle membrane. It catalyses the reaction 3',5'-cyclic GMP(in) + ATP + H2O = 3',5'-cyclic GMP(out) + ADP + phosphate + H(+). It carries out the reaction guanine(out) + ATP + H2O = guanine(in) + ADP + phosphate + H(+). The catalysed reaction is riboflavin(in) + ATP + H2O = riboflavin(out) + ADP + phosphate + H(+). The enzyme catalyses (6S)-5,6,7,8-tetrahydrofolate(out) + ATP + H2O = (6S)-5,6,7,8-tetrahydrofolate(in) + ADP + phosphate + H(+). It catalyses the reaction L-tryptophan(out) + ATP + H2O = L-tryptophan(in) + ADP + phosphate + H(+). It carries out the reaction L-kynurenine(out) + ATP + H2O = L-kynurenine(in) + ADP + phosphate + H(+). The catalysed reaction is xanthine(out) + ATP + H2O = xanthine(in) + ADP + phosphate + H(+). ATP-dependent transporter of the ATP-binding cassette (ABC) family which transports various molecules including bioamines, neurotransmitters, metabolic intermediates and second messengers. In the eye, required for the transport of the eye red and brown pigment precursors, guanine and tryptophan, into pigment cell granules. Probably in association with bw/brown, involved in the transport of guanine. Probably in association with st/scarlet involved in the transport of kynurenine and probably tryptophan. Involved in the transport of kynurenine in pupal eyes. May play a role in histamine uptake by the lamina epithelial glia which surrounds photoreceptors R1-R6. In Malpighian tubules, involved in the transport of cGMP, guanine, xanthine, riboflavin, kynurenine and tryptophan. Probably in association with br/brown, involved in aging-induced intestinal stem cell proliferation in the midgut by regulating tetrahydrofolate transport. Probably in association with st/scarlet, plays a role in zinc storage granule biogenesis in Malpighian tubule principal epithelial cells. The polypeptide is Protein white (Drosophila melanogaster (Fruit fly)).